Here is a 271-residue protein sequence, read N- to C-terminus: Aminoglycoside 3'-phosphotransferase (271 aa).

Residue aspartate 198 is the Proton acceptor of the active site.

It belongs to the aminoglycoside phosphotransferase family.

It catalyses the reaction kanamycin A + ATP = kanamycin 3'-phosphate + ADP + H(+). Functionally, resistance to kanamycin and structurally-related aminoglycosides, including amikacin. The polypeptide is Aminoglycoside 3'-phosphotransferase (aphA1) (Escherichia coli).